The primary structure comprises 842 residues: Alanine--tRNA ligase (842 aa).

Residues His-549, His-553, Cys-650, and His-654 each contribute to the Zn(2+) site.

It belongs to the class-II aminoacyl-tRNA synthetase family. It depends on Zn(2+) as a cofactor.

The protein localises to the cytoplasm. It catalyses the reaction tRNA(Ala) + L-alanine + ATP = L-alanyl-tRNA(Ala) + AMP + diphosphate. Functionally, catalyzes the attachment of alanine to tRNA(Ala) in a two-step reaction: alanine is first activated by ATP to form Ala-AMP and then transferred to the acceptor end of tRNA(Ala). Also edits incorrectly charged Ser-tRNA(Ala) and Gly-tRNA(Ala) via its editing domain. The chain is Alanine--tRNA ligase from Campylobacter jejuni subsp. jejuni serotype O:23/36 (strain 81-176).